The following is a 265-amino-acid chain: Probable U2 small nuclear ribonucleoprotein A' (265 aa).

4 LRR repeats span residues 20–41 (RERE…GATL), 43–64 (QFDT…PHLP), 65–86 (RLKC…LEEA), and 89–110 (NLGS…EPLV). The LRRCT domain maps to 123–161 (NPVSTKPNYREYMAYKFPQLRLLDFRKIKQKDRQAAQEF).

It belongs to the U2 small nuclear ribonucleoprotein A family. In terms of assembly, interacts with the SMN complex.

Its subcellular location is the nucleus. Functionally, involved in pre-mRNA splicing as component of the spliceosome. Associated with sn-RNP U2, where it contributes to the binding of stem loop IV of U2 snRNA. In the germ line, has a role in oogenesis, by regulating spermatogenesis and nurse cell nuclei chromatin decondensation and dispersal, probably by regulating the splicing of proteins necessary for germline differentiation such as the meiotic protein mei-P26. In Drosophila melanogaster (Fruit fly), this protein is Probable U2 small nuclear ribonucleoprotein A' (U2A).